The chain runs to 287 residues: Inactive phospholipid phosphatase 7 (287 aa).

A disordered region spans residues 1–75 (MPANQTRSRA…NNKDKKELPE (75 aa)). Residues 1–120 (MPANQTRSRA…SSSWGSVRSM (120 aa)) lie on the Cytoplasmic side of the membrane. A compositionally biased stretch (gly residues) spans 31–40 (SGGGGGGGES). Residues 49 to 65 (QRQQQNQQQQGDNPQPE) show a composition bias toward low complexity. Residues 121 to 141 (VKLLALTGHGIPWVFGTIVCL) form a helical membrane-spanning segment. Residues 142–146 (MRSNT) lie on the Extracellular side of the membrane. A helical membrane pass occupies residues 147 to 167 (LAGQEVLVNLLLALLLDVMTV). Over 168-215 (SGMQKLVKRKGPWEMPPGFFDYLAMDIYSFPAAHASRAVMVSKFLLAH) the chain is Cytoplasmic. Residues 216-236 (LVLAVPLRILLVLWAILVGIS) form a helical membrane-spanning segment. Over 237–247 (RVLLGRHHLTD) the chain is Extracellular. Residues 248-268 (VGCGFALGFLHYSLVEMVWLS) form a helical membrane-spanning segment. The Cytoplasmic segment spans residues 269 to 287 (SNTCQTLISIGTFNWSPLY).

This sequence belongs to the PA-phosphatase related phosphoesterase family.

Its subcellular location is the nucleus envelope. The protein resides in the endoplasmic reticulum membrane. The protein localises to the membrane. Functionally, plays a role as negative regulator of myoblast differentiation, in part through effects on MTOR signaling. Has no detectable enzymatic activity. The protein is Inactive phospholipid phosphatase 7 of Danio rerio (Zebrafish).